The primary structure comprises 667 residues: Serine/threonine-protein kinase BUR1 (667 aa).

One can recognise a Protein kinase domain in the interval 60-378 (YKEEEKLGQG…AMSAMKHPFF (319 aa)). Residues 66–74 (LGQGTFGEV) and Lys-89 each bind ATP. The active-site Proton acceptor is Asp-207. Residues 408–667 (HEAMSQKGPS…SEQKDIADLY (260 aa)) form a disordered region. The span at 432 to 443 (KFEKKSGIKREQ) shows a compositional bias: basic and acidic residues. The segment covering 494–516 (NNHSGSLRNRITPSNMGTHSNPR) has biased composition (polar residues). A compositionally biased stretch (low complexity) spans 541–556 (YNRGYSSSVNSRYNNR). Polar residues-rich tracts occupy residues 582-594 (DNNQ…QGHS), 602-611 (SKYNSTQTNI), and 622-632 (NEYNASKLGSQ). A compositionally biased stretch (basic and acidic residues) spans 633 to 667 (DTKKNDYPKHSETQKQQNNEEKKIHSEQKDIADLY).

The protein belongs to the protein kinase superfamily. CMGC Ser/Thr protein kinase family. CDC2/CDKX subfamily.

The protein resides in the nucleus. The catalysed reaction is L-seryl-[protein] + ATP = O-phospho-L-seryl-[protein] + ADP + H(+). It catalyses the reaction L-threonyl-[protein] + ATP = O-phospho-L-threonyl-[protein] + ADP + H(+). It carries out the reaction [DNA-directed RNA polymerase] + ATP = phospho-[DNA-directed RNA polymerase] + ADP + H(+). Its function is as follows. Serine/threonine-protein kinase involved in transcription regulation. Phosphorylates the UBC2/RAD6 ubiquitin-conjugating enzyme (E2), leading to monoubiquitination of histone H2B and the silencing of telomeric-associated genes. Also required for histone H3 methylation. Necessary for the recovery from pheromone-induced growth arrest in the cell cycle G1 phase. The sequence is that of Serine/threonine-protein kinase BUR1 (BUR1) from Candida glabrata (strain ATCC 2001 / BCRC 20586 / JCM 3761 / NBRC 0622 / NRRL Y-65 / CBS 138) (Yeast).